The following is a 160-amino-acid chain: MFPLCRLLACRAQVPSHLVRYLSDSQPPFCIQRLDHLVLTVRSLDRTINFYTKVLGMEATTFKGGRKALSFGMQKINLHEAGKEFEPKASVPSPGSADLCLITETPLSTVVQHLKACGVPVEEGPVSRTGAVGEIISVYMRDPDQNLIEVSNYESDIKKK.

The 121-residue stretch at 33–153 folds into the VOC domain; it reads RLDHLVLTVR…DQNLIEVSNY (121 aa).

Belongs to the glyoxalase I family.

In Xenopus tropicalis (Western clawed frog), this protein is Glyoxalase domain-containing protein 5 (glod5).